The chain runs to 260 residues: Putative ATP-binding protein BAB2_1147 (260 aa).

The ABC transporter domain maps to 5–228 (ISFNNVVMRY…DLPYPRTEAI (224 aa)). Residue 37–44 (GPSGCGKS) participates in ATP binding.

The protein belongs to the ABC transporter superfamily. As to quaternary structure, the complex is composed of two ATP-binding proteins (BAB2_1147), two transmembrane proteins (BAB2_1148) and a solute-binding protein (BAB2_1146).

It is found in the cell inner membrane. Probably part of an ABC transporter complex. Probably Responsible for energy coupling to the transport system. This is Putative ATP-binding protein BAB2_1147 from Brucella abortus (strain 2308).